The chain runs to 901 residues: HTH-type transcriptional regulator MalT (901 aa).

Residue 39–46 (SPAGYGKT) participates in ATP binding. Residues 829 to 894 (ELIRTSPLTQ…DAVQHAQQLL (66 aa)) enclose the HTH luxR-type domain. The H-T-H motif DNA-binding region spans 853 to 872 (NEQIAGELAVAATTIKTHIR).

The protein belongs to the MalT family. In terms of assembly, monomer in solution. Oligomerizes to an active state in the presence of the positive effectors ATP and maltotriose.

Activated by ATP and maltotriose, which are both required for DNA binding. Its function is as follows. Positively regulates the transcription of the maltose regulon whose gene products are responsible for uptake and catabolism of malto-oligosaccharides. Specifically binds to the promoter region of its target genes, recognizing a short DNA motif called the MalT box. This Salmonella agona (strain SL483) protein is HTH-type transcriptional regulator MalT.